A 273-amino-acid chain; its full sequence is Ribosomal RNA small subunit methyltransferase A (273 aa).

Positions 18, 20, 45, 66, 91, and 113 each coordinate S-adenosyl-L-methionine.

This sequence belongs to the class I-like SAM-binding methyltransferase superfamily. rRNA adenine N(6)-methyltransferase family. RsmA subfamily.

It localises to the cytoplasm. It catalyses the reaction adenosine(1518)/adenosine(1519) in 16S rRNA + 4 S-adenosyl-L-methionine = N(6)-dimethyladenosine(1518)/N(6)-dimethyladenosine(1519) in 16S rRNA + 4 S-adenosyl-L-homocysteine + 4 H(+). In terms of biological role, specifically dimethylates two adjacent adenosines (A1518 and A1519) in the loop of a conserved hairpin near the 3'-end of 16S rRNA in the 30S particle. May play a critical role in biogenesis of 30S subunits. The chain is Ribosomal RNA small subunit methyltransferase A from Escherichia coli O81 (strain ED1a).